Reading from the N-terminus, the 462-residue chain is Cysteine--tRNA ligase (462 aa).

Position 29 (Cys-29) interacts with Zn(2+). A 'HIGH' region motif is present at residues 31–41 (PTVYDHAHIGN). Zn(2+)-binding residues include Cys-214, His-239, and Glu-243. The short motif at 272–276 (KMSKS) is the 'KMSKS' region element. ATP is bound at residue Lys-275.

The protein belongs to the class-I aminoacyl-tRNA synthetase family. Monomer. Zn(2+) is required as a cofactor.

It is found in the cytoplasm. The catalysed reaction is tRNA(Cys) + L-cysteine + ATP = L-cysteinyl-tRNA(Cys) + AMP + diphosphate. The protein is Cysteine--tRNA ligase of Xanthobacter autotrophicus (strain ATCC BAA-1158 / Py2).